The sequence spans 858 residues: Autoinducer 2 sensor kinase/phosphatase LuxQ (858 aa).

A run of 2 helical transmembrane segments spans residues 14–34 (STLI…GIFV) and 362–382 (LFNF…LIQI). One can recognise a Histidine kinase domain in the interval 488–710 (KMSHEIRTPI…TFVVTLPVKD (223 aa)). A Phosphohistidine; by autocatalysis modification is found at histidine 491. Residues 735–850 (KVLLVEDNHT…ALHEAFVDFK (116 aa)) enclose the Response regulatory domain. 4-aspartylphosphate is present on aspartate 784.

In terms of assembly, binds the complex formed by the autoinducer and LuxP.

It localises to the cell inner membrane. It carries out the reaction ATP + protein L-histidine = ADP + protein N-phospho-L-histidine.. At low cell density, in absence of autoinducer has a kinase activity, and autophosphorylates on a histidine residue. The phosphoryl group is then transferred to an aspartate residue in the response regulator domain. The phosphoryl group is transferred to LuxU, and ultimately to LuxO. At high cell density, in the presence of autoinducer, the kinase activity is inactivated, and the response regulator domain has a phosphatase activity. The polypeptide is Autoinducer 2 sensor kinase/phosphatase LuxQ (luxQ) (Vibrio parahaemolyticus serotype O3:K6 (strain RIMD 2210633)).